We begin with the raw amino-acid sequence, 178 residues long: Nucleolar protein 16 (178 aa).

Residues 1–31 (MPKAKGKTRRQKFGYSVNRKRLNRNARRKAA) form a disordered region. Residue Thr8 is modified to Phosphothreonine. At Ser16 the chain carries Phosphoserine. A Glycyl lysine isopeptide (Lys-Gly) (interchain with G-Cter in SUMO2) cross-link involves residue Lys74. Lys90 is subject to N6-acetyllysine. Position 144 is a phosphothreonine (Thr144). Residues Phe166, Leu167, Lys172, and Arg173 each participate in a glycyl lysine isopeptide (Lys-Gly) (interchain with G-Cter in SUMO2) cross-link.

The protein belongs to the NOP16 family.

The protein resides in the nucleus. Its subcellular location is the nucleolus. This is Nucleolar protein 16 (NOP16) from Homo sapiens (Human).